Here is a 372-residue protein sequence, read N- to C-terminus: Lipoyl synthase, mitochondrial (372 aa).

[4Fe-4S] cluster-binding residues include cysteine 103, cysteine 108, cysteine 114, cysteine 134, cysteine 138, cysteine 141, and serine 349. In terms of domain architecture, Radical SAM core spans glutamate 119 to leucine 338.

This sequence belongs to the radical SAM superfamily. Lipoyl synthase family. The cofactor is [4Fe-4S] cluster.

It is found in the mitochondrion. It catalyses the reaction [[Fe-S] cluster scaffold protein carrying a second [4Fe-4S](2+) cluster] + N(6)-octanoyl-L-lysyl-[protein] + 2 oxidized [2Fe-2S]-[ferredoxin] + 2 S-adenosyl-L-methionine + 4 H(+) = [[Fe-S] cluster scaffold protein] + N(6)-[(R)-dihydrolipoyl]-L-lysyl-[protein] + 4 Fe(3+) + 2 hydrogen sulfide + 2 5'-deoxyadenosine + 2 L-methionine + 2 reduced [2Fe-2S]-[ferredoxin]. It participates in protein modification; protein lipoylation via endogenous pathway; protein N(6)-(lipoyl)lysine from octanoyl-[acyl-carrier-protein]: step 2/2. Catalyzes the radical-mediated insertion of two sulfur atoms into the C-6 and C-8 positions of the octanoyl moiety bound to the lipoyl domains of lipoate-dependent enzymes, thereby converting the octanoylated domains into lipoylated derivatives. This is Lipoyl synthase, mitochondrial from Drosophila willistoni (Fruit fly).